Reading from the N-terminus, the 240-residue chain is uncharacterized protein (240 aa).

One can recognise an ABC transporter domain in the interval 2–223 (VRIQDLSLAF…GNAPRELHQA (222 aa)). 34 to 41 (GSSGVGKS) serves as a coordination point for ATP.

Belongs to the ABC transporter superfamily.

This is an uncharacterized protein from Haemophilus influenzae (strain ATCC 51907 / DSM 11121 / KW20 / Rd).